The following is a 129-amino-acid chain: Follitropin subunit beta (129 aa).

The signal sequence occupies residues 1-18; it reads MKSVQFCFLFCCWKAICC. Cystine bridges form between C21/C69, C35/C84, C38/C122, C46/C100, C50/C102, and C105/C112. Residues N25 and N42 are each glycosylated (N-linked (GlcNAc...) asparagine).

This sequence belongs to the glycoprotein hormones subunit beta family. As to quaternary structure, heterodimer. The active follitropin is a heterodimer composed of an alpha chain/CGA shared with other hormones and a unique beta chain/FSHB shown here.

The protein resides in the secreted. In terms of biological role, together with the alpha chain CGA constitutes follitropin, the follicle-stimulating hormone, and provides its biological specificity to the hormone heterodimer. Binds FSHR, a G protein-coupled receptor, on target cells to activate downstream signaling pathways. Follitropin is involved in follicle development and spermatogenesis in reproductive organs. In Oryctolagus cuniculus (Rabbit), this protein is Follitropin subunit beta (FSHB).